The following is a 1995-amino-acid chain: uncharacterized protein (1995 aa).

7 consecutive transmembrane segments (helical) span residues 31–51 (NYTE…EFFK), 53–73 (FFSF…PDIA), 106–126 (LVIF…ILPT), 157–177 (FLWL…WLSL), 212–232 (IFLL…PFIS), 254–274 (FLLI…SLLQ), and 307–327 (ILNF…IPYY). Disordered regions lie at residues 1418–1441 (SLKK…HQFS) and 1848–1883 (DLRW…KTNP). 2 stretches are compositionally biased toward basic residues: residues 1422 to 1441 (SQIK…HQFS) and 1853 to 1863 (PSSRTKQKRKD).

Belongs to the ycf78 family.

Its subcellular location is the plastid. The protein localises to the chloroplast membrane. Essential for cell growth. May be involved in binding chloroplast DNA to either the chloroplast envelope or the thylakoid membrane. This is an uncharacterized protein from Chlamydomonas reinhardtii (Chlamydomonas smithii).